The sequence spans 357 residues: F-box only protein 25 (357 aa).

Positions 1-83 (MPFLGQDWRS…DTAAHSFYRE (83 aa)) are interaction with beta-actin. The F-box domain occupies 224–271 (GLTLSDLPLHMLNNILYRFSDGWDIVTLGQVTPTLYMLSEDRRLWKRL).

In terms of assembly, part of a SCF (SKP1-cullin-F-box) protein ligase complex consisting of FBXO25, SKP1, CUL1 and RBX1. Interacts directly with SKP1 and CUL1. Interacts (via C-terminus) with actin (via N-terminus).

It localises to the nucleus. It functions in the pathway protein modification; protein ubiquitination. In terms of biological role, substrate-recognition component of the SCF (SKP1-CUL1-F-box protein)-type E3 ubiquitin ligase complex. May play a role in accumulation of expanded polyglutamine (polyQ) protein huntingtin (HTT). This chain is F-box only protein 25 (Fbxo25), found in Rattus norvegicus (Rat).